A 142-amino-acid polypeptide reads, in one-letter code: Small heat shock protein IbpB (142 aa).

The region spanning 25-136 (GQEPQGFPPY…QPQRIAIGTT (112 aa)) is the sHSP domain.

It belongs to the small heat shock protein (HSP20) family. As to quaternary structure, homodimer. Forms homomultimers of about 100-150 subunits at optimal growth temperatures. Conformation changes to oligomers at high temperatures or high ionic concentrations. The decrease in size of the multimers is accompanied by an increase in chaperone activity.

Its subcellular location is the cytoplasm. Associates with aggregated proteins, together with IbpA, to stabilize and protect them from irreversible denaturation and extensive proteolysis during heat shock and oxidative stress. Aggregated proteins bound to the IbpAB complex are more efficiently refolded and reactivated by the ATP-dependent chaperone systems ClpB and DnaK/DnaJ/GrpE. Its activity is ATP-independent. The polypeptide is Small heat shock protein IbpB (Serratia proteamaculans (strain 568)).